Here is a 283-residue protein sequence, read N- to C-terminus: Putative Ig-like domain-containing protein ORF10 (283 aa).

Positions 1-55 (MIDKRNKKAVTHISTCLCHSSIPIYGDSPFLNTHRAAMDPRPLVLLLLLASHIST) are cleaved as a signal peptide. N75, N92, N121, N157, N179, N198, N223, and N229 each carry an N-linked (GlcNAc...) asparagine; by host glycan. Residues 129–227 (QPLGQSIHHA…IDQQTNLTLT (99 aa)) form the Ig-like domain.

The protein is Putative Ig-like domain-containing protein ORF10 of Galliformes (FAdV-1).